The chain runs to 310 residues: Putative S-adenosyl-L-methionine-dependent methyltransferase MMAR_0357 (310 aa).

S-adenosyl-L-methionine is bound by residues D132 and 161–162; that span reads DL.

This sequence belongs to the UPF0677 family.

Functionally, exhibits S-adenosyl-L-methionine-dependent methyltransferase activity. The protein is Putative S-adenosyl-L-methionine-dependent methyltransferase MMAR_0357 of Mycobacterium marinum (strain ATCC BAA-535 / M).